The following is a 603-amino-acid chain: MSATAAASSSIAVATNSLRNVTLSSRSPLPSAISVAFPSRGRNTLQRRLVLVSCSTGDGSKPTILVAEKLGDAGIKLLEDVANVDCSYNMTPEELNIKISLCDALIVRSGTKVGREVFESSHGRLKVVGRAGVGIDNVDLSAATEFGCLVVNAPTANTIAAAEHGIALMAAMARNVAQADASVKAGEWKRNKYVGVSLVGKTLAVLGFGKVGTEVARRAKGLGMRVIAHDPYAPADRAHAIGVDLVSFDEALATADFISLHMPLTPTTSKILNDETFAKMKKGVRIVNVARGGVIDEDALVRALDAGIVAQAALDVFTKEPPAKDSKLVQHERVTVTPHLGASTMEAQEGVAIEIAEAVVGALNGELAATAVNAPMVSAEVLTELKPYVVLAEKLGRLAVQLVAGGSGVKNAKITYASARATDDLDTRLLRAMITKGIIEPISDVYVNLVNADFTAKQRGLRLSEERVLLDGSPESPLETITVQLSNVESKFASSLSESGEVKVEGKVKDGVPHLTKVGSFEVDVTLEGSIILCRQVDQPGMIGTVGSILGESNVNVNFMSVGRIAPRKQAIMAIGVDDIPSKETLKKIGEIPAVEEFVFLKL.

The transit peptide at 1 to 54 (MSATAAASSSIAVATNSLRNVTLSSRSPLPSAISVAFPSRGRNTLQRRLVLVSC) directs the protein to the chloroplast. NAD(+) contacts are provided by residues 210–211 (KV), aspartate 230, 289–291 (VAR), and aspartate 315. Arginine 291 is an active-site residue. The active site involves glutamate 320. Histidine 339 (proton donor) is an active-site residue. 339 to 342 (HLGA) contributes to the NAD(+) binding site. The ACT domain maps to 531 to 603 (IILCRQVDQP…AVEEFVFLKL (73 aa)).

It belongs to the D-isomer specific 2-hydroxyacid dehydrogenase family. As to expression, ubiquitous, but highly expressed in roots. Expressed in vasculature, root and shoot meristems, distal part of cotyledons and leaves, anther, stigma and pollen grains. Detected at the tip of the cotyledons in late embryos.

It localises to the plastid. Its subcellular location is the chloroplast. It carries out the reaction (2R)-3-phosphoglycerate + NAD(+) = 3-phosphooxypyruvate + NADH + H(+). It participates in amino-acid biosynthesis; L-serine biosynthesis; L-serine from 3-phospho-D-glycerate: step 1/3. Its activity is regulated as follows. Partially inhibited by 5 mM serine. Its function is as follows. Involved in the plastidial phosphorylated pathway of serine biosynthesis (PPSB). Required for mature pollen development. In Arabidopsis thaliana (Mouse-ear cress), this protein is D-3-phosphoglycerate dehydrogenase 1, chloroplastic (PGDH1).